The following is a 327-amino-acid chain: Tagatose 1,6-diphosphate aldolase 2 (327 aa).

This sequence belongs to the aldolase LacD family.

It catalyses the reaction D-tagatofuranose 1,6-bisphosphate = D-glyceraldehyde 3-phosphate + dihydroxyacetone phosphate. The protein operates within carbohydrate metabolism; D-tagatose 6-phosphate degradation; D-glyceraldehyde 3-phosphate and glycerone phosphate from D-tagatose 6-phosphate: step 2/2. The protein is Tagatose 1,6-diphosphate aldolase 2 (lacD2) of Streptococcus pyogenes serotype M3 (strain ATCC BAA-595 / MGAS315).